The sequence spans 1159 residues: MYLSICCCFLLWAPALTLKNLNYSVPEEQGAGTVIGNIGRDARLQPGLPPAERGGGGRSKSGSYRVLENSAPHLLDVDADSGLLYTKQRIDRESLCRHNAKCQLSLEVFANDKEICMIKVEIQDINDNAPSFSSDQIEMDISENAAPGTRFPLTSAHDPDAGENGLRTYLLTRDDHGLFGLDVKSRGDGTKFPELVIQKALDREQQNHHTLVLTALDGGEPPRSATVQINVKVIDSNDNSPVFEAPSYLVELPENAPLGTVVIDLNATDADEGPNGEVLYSFSSYVPDRVRELFSIDPKTGLIRVKGNLDYEENGMLEIDVQARDLGPNPIPAHCKVTVKLIDRNDNAPSIGFVSVRQGALSEAAPPGTVIALVRVTDRDSGKNGQLQCRVLGGGGTGGGGGLGGPGGSVPFKLEENYDNFYTVVTDRPLDRETQDEYNVTIVARDGGSPPLNSTKSFAIKILDENDNPPRFTKGLYVLQVHENNIPGEYLGSVLAQDPDLGQNGTVSYSILPSHIGDVSIYTYVSVNPTNGAIYALRSFNFEQTKAFEFKVLAKDSGAPAHLESNATVRVTVLDVNDNAPVIVLPTLQNDTAELQVPRNAGLGYLVSTVRALDSDFGESGRLTYEIVDGNDDHLFEIDPSSGEIRTLHPFWEDVTPVVELVVKVTDHGKPTLSAVAKLIIRSVSGSLPEGVPRVNGEQHHWDMSLPLIVTLSTISIILLAAMITIAVKCKRENKEIRTYNCRIAEYSHPQLGGGKGKKKKINKNDIMLVQSEVEERNAMNVMNVVSSPSLATSPMYFDYQTRLPLSSPRSEVMYLKPASNNLTVPQGHAGCHTSFTGQGTNASETPATRMSIIQTDNFPAEPNYMGSRQQFVQSSSTFKDPERASLRDSGHGDSDQADSDQDTNKGSCCDMSVREALKMKTTSTKSQPLEQEPEECVNCTDECRVLGHSDRCWMPQFPAANQAENADYRTNLFVPTVEANVETETYETVNPTGKKTFCTFGKDKREHTILIANVKPYLKAKRALSPLLQEVPSASSSPTKACIEPCTSTKGSLDGCEAKPGALAEASSQYLPTDSQYLSPSKQPRDPPFMASDQMARVFADVHSRASRDSSEMGAVLEQLDHPNRDLGRESVDAEEVVREIDKLLQDCRGNDPVAVRK.

Positions 1-17 (MYLSICCCFLLWAPALT) are cleaved as a signal peptide. Cadherin domains are found at residues 18-132 (LKNL…APSF), 133-243 (SSDQ…SPVF), 244-351 (EAPS…APSI), 353-472 (FVSV…PPRF), 473-583 (TKGL…APVI), and 589-695 (QNDT…VPRV). At 18 to 707 (LKNLNYSVPE…EQHHWDMSLP (690 aa)) the chain is on the extracellular side. N-linked (GlcNAc...) asparagine glycosylation is present at Asn-22. The Cell attachment site signature appears at 186–188 (RGD). N-linked (GlcNAc...) asparagine glycans are attached at residues Asn-266, Asn-439, Asn-453, Asn-504, Asn-566, and Asn-590. The chain crosses the membrane as a helical span at residues 708 to 728 (LIVTLSTISIILLAAMITIAV). Residues 729–1159 (KCKRENKEIR…RGNDPVAVRK (431 aa)) are Cytoplasmic-facing. Disordered stretches follow at residues 858–909 (NFPA…KGSC) and 1108–1132 (SRDS…GRES). Residues 867 to 879 (GSRQQFVQSSSTF) are compositionally biased toward polar residues. Composition is skewed to basic and acidic residues over residues 880 to 895 (KDPE…HGDS) and 1120 to 1132 (QLDH…GRES).

The protein localises to the cell membrane. Its function is as follows. Potential calcium-dependent cell-adhesion protein. The chain is Protocadherin-17 (PCDH17) from Homo sapiens (Human).